The sequence spans 398 residues: Keratinocyte differentiation factor 1 (398 aa).

2 disordered regions span residues 1–60 (MPRP…SITF) and 123–156 (AEAN…STMG). Residues 44–55 (RPDPKDPGHHGP) are compositionally biased toward basic and acidic residues. A Phosphoserine modification is found at Ser218. Disordered regions lie at residues 307-340 (RKSR…TMVG) and 369-392 (GAPG…SGAP). Over residues 377–389 (HDSSFQGTDTDSS) the composition is skewed to polar residues.

It localises to the cytoplasm. It is found in the cell junction. Its function is as follows. Plays a role in the regulation of the epidermis formation during early development. Required both as an inhibitor of basal cell proliferation and a promoter of differentiation of basal progenitor cell progeny. The polypeptide is Keratinocyte differentiation factor 1 (KDF1) (Homo sapiens (Human)).